We begin with the raw amino-acid sequence, 394 residues long: MAAETFLFTSESVNEGHPDKLCDQVSDAVLDACLAQDPDSKVACETCTKTNMVMVFGEITTKATVDYEKIVRDTCRGIGFVSDDVGLDADRCKVLVNIEQQSPDIAQGVHGHFTKRPEEIGAGDQGHMFGYATDETPELMPLSHVLATKLGARLTEVRKNGTCAWLRPDGKTQVTVEYLNDAGAMVPVRVHTVLISTQHDETVTNDEIAADLKEHVIKPVIPDKYLDEKTIFHLNPSGRFVIGGPHGDAGLTGRKIIIDTYGGWGAHGGGAFSGKDPTKVDRSGAYIARQAAKSIVASGLARRCIVQVSYAIGVPEPLSVFVDSYGTGKIPDKEILKIVKENFDFRPGMMTINLDLKRGGNRFIKTAAYGHFGREDPDFTWEVVKPLKYEKASS.

A Mg(2+)-binding site is contributed by Glu-11. His-17 is an ATP binding site. Glu-45 provides a ligand contact to K(+). L-methionine contacts are provided by Glu-58 and Gln-101. ATP is bound by residues 169–171 (DGK), 237–240 (SGRF), Asp-248, 254–255 (RK), Ala-271, Lys-275, and Lys-279. Asp-248 lines the L-methionine pocket. Residue Lys-279 participates in L-methionine binding.

The protein belongs to the AdoMet synthase family. Homotetramer. The cofactor is Mn(2+). Requires Mg(2+) as cofactor. Co(2+) serves as cofactor. It depends on K(+) as a cofactor.

The protein resides in the cytoplasm. The enzyme catalyses L-methionine + ATP + H2O = S-adenosyl-L-methionine + phosphate + diphosphate. It participates in amino-acid biosynthesis; S-adenosyl-L-methionine biosynthesis; S-adenosyl-L-methionine from L-methionine: step 1/1. Catalyzes the formation of S-adenosylmethionine from methionine and ATP. The reaction comprises two steps that are both catalyzed by the same enzyme: formation of S-adenosylmethionine (AdoMet) and triphosphate, and subsequent hydrolysis of the triphosphate. This chain is S-adenosylmethionine synthase 2 (SAM2), found in Oryza sativa subsp. japonica (Rice).